The chain runs to 294 residues: 33 kDa chaperonin (294 aa).

Intrachain disulfides connect Cys-236-Cys-238 and Cys-269-Cys-272.

This sequence belongs to the HSP33 family. In terms of processing, under oxidizing conditions two disulfide bonds are formed involving the reactive cysteines. Under reducing conditions zinc is bound to the reactive cysteines and the protein is inactive.

It localises to the cytoplasm. Redox regulated molecular chaperone. Protects both thermally unfolding and oxidatively damaged proteins from irreversible aggregation. Plays an important role in the bacterial defense system toward oxidative stress. The polypeptide is 33 kDa chaperonin (Desulforamulus reducens (strain ATCC BAA-1160 / DSM 100696 / MI-1) (Desulfotomaculum reducens)).